The chain runs to 136 residues: Keratin-associated protein 4-2 (136 aa).

20 consecutive repeat copies span residues 5 to 9 (CCGSV), 20 to 24 (CCRPS), 25 to 29 (CCQTT), 30 to 34 (CCRTT), 35 to 39 (CCRPS), 40 to 44 (CCVSS), 45 to 49 (CCRPQ), 50 to 54 (CCQSV), 55 to 59 (CCQPT), 60 to 64 (CCSPS), 65 to 69 (CCQTT), 70 to 74 (CCRTT), 75 to 79 (CCRPS), 80 to 84 (CCVSS), 90 to 94 (CCQSV), 95 to 99 (YCQPT), 100 to 104 (CCRPS), 110 to 114 (CCRTT), 120 to 124 (CCVST), and 125 to 129 (CCRPT). The tract at residues 5–129 (CCGSVCSDQG…CCVSTCCRPT (125 aa)) is 20 X 5 AA repeats OF C-C-[GRQVS]-[SPT]-[VSTQ].

Belongs to the KRTAP type 4 family. As to quaternary structure, interacts with hair keratins.

Its function is as follows. In the hair cortex, hair keratin intermediate filaments are embedded in an interfilamentous matrix, consisting of hair keratin-associated proteins (KRTAP), which are essential for the formation of a rigid and resistant hair shaft through their extensive disulfide bond cross-linking with abundant cysteine residues of hair keratins. The matrix proteins include the high-sulfur and high-glycine-tyrosine keratins. The chain is Keratin-associated protein 4-2 (KRTAP4-2) from Homo sapiens (Human).